Reading from the N-terminus, the 221-residue chain is Probable GTP-binding protein EngB (221 aa).

An EngB-type G domain is found at 23–211 (PLREVAFAGR…DNLIIKWLFE (189 aa)). Residues serine 38 and threonine 60 each coordinate Mg(2+).

Belongs to the TRAFAC class TrmE-Era-EngA-EngB-Septin-like GTPase superfamily. EngB GTPase family. It depends on Mg(2+) as a cofactor.

In terms of biological role, necessary for normal cell division and for the maintenance of normal septation. The chain is Probable GTP-binding protein EngB from Polynucleobacter asymbioticus (strain DSM 18221 / CIP 109841 / QLW-P1DMWA-1) (Polynucleobacter necessarius subsp. asymbioticus).